The primary structure comprises 987 residues: uncharacterized protein (987 aa).

Helical transmembrane passes span 12–32 (FIYLCILLFVFMASMLNSVSG) and 958–978 (VENNFEIFLILINVIFGLGIL).

To M.jannaschii MJ1393 and A.fulgidus AF2028.

The protein resides in the cell membrane. This is an uncharacterized protein from Methanocaldococcus jannaschii (strain ATCC 43067 / DSM 2661 / JAL-1 / JCM 10045 / NBRC 100440) (Methanococcus jannaschii).